Reading from the N-terminus, the 192-residue chain is Probable protein adenylyltransferase y4lH (192 aa).

Residues 52–190 (LDFAHYRALH…LAPLAAEIRR (139 aa)) form the Fido domain. ATP-binding positions include 82–83 (KG) and 139–141 (GNG).

This sequence belongs to the fic family.

The catalysed reaction is L-tyrosyl-[protein] + ATP = O-(5'-adenylyl)-L-tyrosyl-[protein] + diphosphate. It catalyses the reaction L-threonyl-[protein] + ATP = 3-O-(5'-adenylyl)-L-threonyl-[protein] + diphosphate. Probable adenylyltransferase that mediates the addition of adenosine 5'-monophosphate (AMP) to specific residues of target proteins. In Sinorhizobium fredii (strain NBRC 101917 / NGR234), this protein is Probable protein adenylyltransferase y4lH.